A 198-amino-acid polypeptide reads, in one-letter code: Threonylcarbamoyl-AMP synthase (198 aa).

The YrdC-like domain maps to Leu15–Gly198.

The protein belongs to the SUA5 family. TsaC subfamily.

The protein localises to the cytoplasm. The catalysed reaction is L-threonine + hydrogencarbonate + ATP = L-threonylcarbamoyladenylate + diphosphate + H2O. Its function is as follows. Required for the formation of a threonylcarbamoyl group on adenosine at position 37 (t(6)A37) in tRNAs that read codons beginning with adenine. Catalyzes the conversion of L-threonine, HCO(3)(-)/CO(2) and ATP to give threonylcarbamoyl-AMP (TC-AMP) as the acyladenylate intermediate, with the release of diphosphate. This Baumannia cicadellinicola subsp. Homalodisca coagulata protein is Threonylcarbamoyl-AMP synthase.